We begin with the raw amino-acid sequence, 230 residues long: UPF0173 metal-dependent hydrolase Rsph17025_2229 (230 aa).

The protein belongs to the UPF0173 family.

The protein is UPF0173 metal-dependent hydrolase Rsph17025_2229 of Cereibacter sphaeroides (strain ATCC 17025 / ATH 2.4.3) (Rhodobacter sphaeroides).